The chain runs to 355 residues: UDP-N-acetylglucosamine--N-acetylmuramyl-(pentapeptide) pyrophosphoryl-undecaprenol N-acetylglucosamine transferase (355 aa).

UDP-N-acetyl-alpha-D-glucosamine contacts are provided by residues 15 to 17, Asn-127, Arg-163, Ser-191, Ile-244, 263 to 268, and Gln-288; these read TGG and ALTVSE.

It belongs to the glycosyltransferase 28 family. MurG subfamily.

Its subcellular location is the cell inner membrane. It carries out the reaction di-trans,octa-cis-undecaprenyl diphospho-N-acetyl-alpha-D-muramoyl-L-alanyl-D-glutamyl-meso-2,6-diaminopimeloyl-D-alanyl-D-alanine + UDP-N-acetyl-alpha-D-glucosamine = di-trans,octa-cis-undecaprenyl diphospho-[N-acetyl-alpha-D-glucosaminyl-(1-&gt;4)]-N-acetyl-alpha-D-muramoyl-L-alanyl-D-glutamyl-meso-2,6-diaminopimeloyl-D-alanyl-D-alanine + UDP + H(+). It functions in the pathway cell wall biogenesis; peptidoglycan biosynthesis. Cell wall formation. Catalyzes the transfer of a GlcNAc subunit on undecaprenyl-pyrophosphoryl-MurNAc-pentapeptide (lipid intermediate I) to form undecaprenyl-pyrophosphoryl-MurNAc-(pentapeptide)GlcNAc (lipid intermediate II). This is UDP-N-acetylglucosamine--N-acetylmuramyl-(pentapeptide) pyrophosphoryl-undecaprenol N-acetylglucosamine transferase from Escherichia coli (strain 55989 / EAEC).